Consider the following 342-residue polypeptide: Mitochondrial fission factor (342 aa).

Residues 1–322 are Cytoplasmic-facing; it reads MSKGTSSDTS…ENKERAKREM (322 aa). A Phosphothreonine modification is found at Thr-115. Ala-146 bears the Phosphoserine mark. Position 149 is a phosphothreonine (Arg-149). Residues Lys-151, Ser-155, Ser-157, and Ser-172 each carry the phosphoserine modification. Thr-200 bears the Phosphothreonine mark. Phosphoserine occurs at positions 202, 229, 233, and 295. Residues 291–322 adopt a coiled-coil conformation; that stretch reads VDAASLRRQIIKLNRRLQLLEEENKERAKREM. Residues 323-340 traverse the membrane as a helical; Anchor for type IV membrane protein segment; sequence VMYSITVAFWLLNSWLWF. Over 341–342 the chain is Mitochondrial intermembrane; the sequence is RR.

This sequence belongs to the Tango11 family. As to quaternary structure, homodimer. Interacts with DNM1L. Interacts with C11orf65/MFI; the interaction inhibits MFF interaction with DNM1L. Highly expressed in heart, kidney, liver, brain, muscle, and stomach.

The protein localises to the mitochondrion outer membrane. The protein resides in the peroxisome. It localises to the cytoplasmic vesicle. Its subcellular location is the secretory vesicle. It is found in the synaptic vesicle. In terms of biological role, plays a role in mitochondrial and peroxisomal fission. Promotes the recruitment and association of the fission mediator dynamin-related protein 1 (DNM1L) to the mitochondrial surface. May be involved in regulation of synaptic vesicle membrane dynamics by recruitment of DNM1L to clathrin-containing vesicles. The sequence is that of Mitochondrial fission factor (MFF) from Homo sapiens (Human).